Here is a 299-residue protein sequence, read N- to C-terminus: Single myb histone 1 (299 aa).

One can recognise an HTH myb-type domain in the interval 1-61; it reads MGAPKQRWTP…KWRNLSVTAG (61 aa). Residues 28–57 constitute a DNA-binding region (H-T-H motif); that stretch reads WRTILRDSDFSALLRLRSNVDLKDKWRNLS. Positions 124 to 192 constitute an H15 domain; sequence SVARLDDLIL…KVNQKYRIAP (69 aa). Positions 238 to 279 form a coiled coil; sequence EEAAAFAAKAVAEAEVAIAEAEEAARVAEAAENDAEAAKAFL.

Belongs to the histone H1/H5 family. SMH subfamily. As to quaternary structure, forms a homodimer and heterodimers. Expressed in leaves.

The protein resides in the nucleus. It is found in the chromosome. The protein localises to the nucleolus. It localises to the telomere. Binds preferentially double-stranded telomeric repeats 5'-TTTAGGG-3', but can also bind to the single G-rich and C-rich telomeric strand. The polypeptide is Single myb histone 1 (SMH1) (Zea mays (Maize)).